Reading from the N-terminus, the 84-residue chain is Small ribosomal subunit protein uS17 (84 aa).

It belongs to the universal ribosomal protein uS17 family. In terms of assembly, part of the 30S ribosomal subunit.

Its function is as follows. One of the primary rRNA binding proteins, it binds specifically to the 5'-end of 16S ribosomal RNA. The polypeptide is Small ribosomal subunit protein uS17 (Vibrio cholerae serotype O1 (strain ATCC 39541 / Classical Ogawa 395 / O395)).